Here is a 248-residue protein sequence, read N- to C-terminus: 2,3-bisphosphoglycerate-dependent phosphoglycerate mutase (248 aa).

Substrate contacts are provided by residues 8 to 15, 21 to 22, Arg-60, 87 to 90, Lys-98, 114 to 115, and 183 to 184; these read RHGESTWN, TG, EKHY, RR, and GN. His-9 (tele-phosphohistidine intermediate) is an active-site residue. Glu-87 (proton donor/acceptor) is an active-site residue.

Belongs to the phosphoglycerate mutase family. BPG-dependent PGAM subfamily.

It catalyses the reaction (2R)-2-phosphoglycerate = (2R)-3-phosphoglycerate. It participates in carbohydrate degradation; glycolysis; pyruvate from D-glyceraldehyde 3-phosphate: step 3/5. In terms of biological role, catalyzes the interconversion of 2-phosphoglycerate and 3-phosphoglycerate. The protein is 2,3-bisphosphoglycerate-dependent phosphoglycerate mutase of Elusimicrobium minutum (strain Pei191).